We begin with the raw amino-acid sequence, 144 residues long: Transcriptional regulator SlyA (144 aa).

Residues 2–135 (ESTLGSDLAR…LVGLIGKLEQ (134 aa)) form the HTH marR-type domain. A DNA-binding region (H-T-H motif) is located at residues 49-72 (QIQLAKAIGIEQPSLVRTLDQLEE).

This sequence belongs to the SlyA family. Homodimer.

Transcription regulator that can specifically activate or repress expression of target genes. In Serratia proteamaculans (strain 568), this protein is Transcriptional regulator SlyA.